The primary structure comprises 501 residues: MSDQQLDQHELQQEENKLIAQRKEKLAAVREARAIAFPNDFRRDAYFADLQKQYADKTKEELEAAAIPVKVAGRIMLNRGSFIVLQDSSERLQVYVNRKTLPEETLAEIKTWDLGDIIGAEGVLARSGKGDLYVDMTSVRLLTKSLRPLPDKHHGLTDTEQRYRQRYVDLMVNEETRHTFRVRSQVIAHIRRFLSERGFLEVETPMLQTIPGGAAAKPFETHHNALDMAMFLRIAPELYLKRLVVGGFEKVFEINRNFRNEGVSTRHNPEFTMLEFYQAYADYEDNMDLTEELFRELAQAVLGTTDVPYGDKVFHFGEPFVRLSVFDSILKYNPEISAADLNDVEKARAIAKKAGAKVLGHEGLGKLQVMIFEELVEHKLEQPHFITRYPFEVSPLARRNDEDPSVTDRFELFIGGREIANAYSELNDAEDQAERFMLQVKEKDAGDDEAMHYDADFINALEYGMPPTAGEGIGIDRLVMLLTNSPSIRDVILFPHMRPQA.

Positions 411 and 418 each coordinate Mg(2+).

This sequence belongs to the class-II aminoacyl-tRNA synthetase family. In terms of assembly, homodimer. It depends on Mg(2+) as a cofactor.

Its subcellular location is the cytoplasm. It carries out the reaction tRNA(Lys) + L-lysine + ATP = L-lysyl-tRNA(Lys) + AMP + diphosphate. The polypeptide is Lysine--tRNA ligase (Pseudomonas aeruginosa (strain UCBPP-PA14)).